Reading from the N-terminus, the 214-residue chain is uncharacterized protein (214 aa).

Residues 9-31 traverse the membrane as a helical segment; the sequence is FLYFAISVLVNLLFLKILYIYLF. Positions 53–74 are disordered; sequence APPKKPGKPQKKVVKKKPEAVS. The span at 54 to 67 shows a compositional bias: basic residues; it reads PPKKPGKPQKKVVK.

Its subcellular location is the membrane. This is an uncharacterized protein from Aquifex aeolicus (strain VF5).